Here is a 452-residue protein sequence, read N- to C-terminus: Glycoprotein endo-alpha-1,2-mannosidase-like protein (452 aa).

Topologically, residues 1–8 (MARRRRRA) are cytoplasmic. A helical; Signal-anchor for type II membrane protein transmembrane segment spans residues 9–29 (CIALFLVLLFAFGTLMGLRTL). The Lumenal portion of the chain corresponds to 30–452 (KAPDGLPALG…FIKEKEQWLM (423 aa)). Residues 40 to 90 (PGPELAPFERRPEGNPAPARAPAAPAAPPPPPPRTAAPRASLGPAEADPAP) are disordered. Positions 64-74 (PAAPPPPPPRT) are enriched in pro residues.

It belongs to the glycosyl hydrolase 99 family.

It localises to the golgi apparatus membrane. The polypeptide is Glycoprotein endo-alpha-1,2-mannosidase-like protein (Maneal) (Mus musculus (Mouse)).